The chain runs to 384 residues: S-adenosylmethionine synthase (384 aa).

An ATP-binding site is contributed by His15. Asp17 serves as a coordination point for Mg(2+). Glu43 provides a ligand contact to K(+). Residues Glu56 and Gln99 each coordinate L-methionine. The segment at 99–109 is flexible loop; the sequence is QSPDINQGVDR. Residues 164–166, 230–231, Asp239, 245–246, Ala262, and Lys266 contribute to the ATP site; these read DAK, RF, and RK. Asp239 is an L-methionine binding site. Lys270 is an L-methionine binding site.

This sequence belongs to the AdoMet synthase family. Homotetramer; dimer of dimers. Mg(2+) serves as cofactor. The cofactor is K(+).

The protein localises to the cytoplasm. It carries out the reaction L-methionine + ATP + H2O = S-adenosyl-L-methionine + phosphate + diphosphate. It functions in the pathway amino-acid biosynthesis; S-adenosyl-L-methionine biosynthesis; S-adenosyl-L-methionine from L-methionine: step 1/1. Functionally, catalyzes the formation of S-adenosylmethionine (AdoMet) from methionine and ATP. The overall synthetic reaction is composed of two sequential steps, AdoMet formation and the subsequent tripolyphosphate hydrolysis which occurs prior to release of AdoMet from the enzyme. The protein is S-adenosylmethionine synthase of Salmonella choleraesuis (strain SC-B67).